A 242-amino-acid polypeptide reads, in one-letter code: Large ribosomal subunit protein uL2 (242 aa).

The interval 201-242 is disordered; sequence VDHPFGGGRHQHTGKPTTVSRKKVPPGRKVGHISARRTGVRK. A compositionally biased stretch (basic residues) spans 220–242; that stretch reads SRKKVPPGRKVGHISARRTGVRK.

Belongs to the universal ribosomal protein uL2 family. Part of the 50S ribosomal subunit. Forms a bridge to the 30S subunit in the 70S ribosome.

One of the primary rRNA binding proteins. Required for association of the 30S and 50S subunits to form the 70S ribosome, for tRNA binding and peptide bond formation. It has been suggested to have peptidyltransferase activity; this is somewhat controversial. Makes several contacts with the 16S rRNA in the 70S ribosome. The polypeptide is Large ribosomal subunit protein uL2 (Methanocaldococcus jannaschii (strain ATCC 43067 / DSM 2661 / JAL-1 / JCM 10045 / NBRC 100440) (Methanococcus jannaschii)).